A 339-amino-acid polypeptide reads, in one-letter code: 3-isopropylmalate dehydrogenase (339 aa).

Residues Arg88, Arg98, Arg122, and Asp212 each coordinate substrate. The Mg(2+) site is built by Asp212, Asp236, and Asp240. An NAD(+)-binding site is contributed by Gly272–Asp284.

It belongs to the isocitrate and isopropylmalate dehydrogenases family. LeuB type 2 subfamily. In terms of assembly, homodimer. Requires Mg(2+) as cofactor. It depends on Mn(2+) as a cofactor.

It is found in the cytoplasm. The enzyme catalyses (2R,3S)-3-isopropylmalate + NAD(+) = 4-methyl-2-oxopentanoate + CO2 + NADH. It participates in amino-acid biosynthesis; L-leucine biosynthesis; L-leucine from 3-methyl-2-oxobutanoate: step 3/4. Catalyzes the oxidation of 3-carboxy-2-hydroxy-4-methylpentanoate (3-isopropylmalate) to 3-carboxy-4-methyl-2-oxopentanoate. The product decarboxylates to 4-methyl-2 oxopentanoate. The protein is 3-isopropylmalate dehydrogenase of Corynebacterium diphtheriae (strain ATCC 700971 / NCTC 13129 / Biotype gravis).